The following is a 1039-amino-acid chain: MARALCPLQALWLLEWVLLLLGPCAAPPAWALNLDPVQLTFYAGPNGSQFGFSLDFHKDSHGRVAIVVGAPRTLGPSQEETGGVFLCPWRAEGGQCPSLLFDLRDETRNVGSQTLQTFKARQGLGASVVSWSDVIVACAPWQHWNVLEKTEEAEKTPVGSCFLAQPESGRRAEYSPCRGNTLSRIYVENDFSWDKRYCEAGFSSVVTQAGELVLGAPGGYYFLGLLAQAPVADIFSSYRPGILLWHVSSQSLSFDSSNPEYFDGYWGYSVAVGEFDGDLNTTEYVVGAPTWSWTLGAVEILDSYYQRLHRLRGEQMASYFGHSVAVTDVNGDGRHDLLVGAPLYMESRADRKLAEVGRVYLFLQPRGPHALGAPSLLLTGTQLYGRFGSAIAPLGDLDRDGYNDIAVAAPYGGPSGRGQVLVFLGQSEGLRSRPSQVLDSPFPTGSAFGFSLRGAVDIDDNGYPDLIVGAYGANQVAVYRAQPVVKASVQLLVQDSLNPAVKSCVLPQTKTPVSCFNIQMCVGATGHNIPQKLSLNAELQLDRQKPRQGRRVLLLGSQQAGTTLNLDLGGKHSPICHTTMAFLRDEADFRDKLSPIVLSLNVSLPPTEAGMAPAVVLHGDTHVQEQTRIVLDCGEDDVCVPQLQLTASVTGSPLLVGADNVLELQMDAANEGEGAYEAELAVHLPQGAHYMRALSNVEGFERLICNQKKENETRVVLCELGNPMKKNAQIGIAMLVSVGNLEEAGESVSFQLQIRSKNSQNPNSKIVLLDVPVRAEAQVELRGNSFPASLVVAAEEGEREQNSLDSWGPKVEHTYELHNNGPGTVNGLHLSIHLPGQSQPSDLLYILDIQPQGGLQCFPQPPVNPLKVDWGLPIPSPSPIHPAHHKRDRRQIFLPEPEQPSRLQDPVLVSCDSAPCTVVQCDLQEMARGQRAMVTVLAFLWLPSLYQRPLDQFVLQSHAWFNVSSLPYAVPPLSLPRGEAQVWTQLLRALEERAIPIWWVLVGVLGGLLLLTILVLAMWKVGFFKRNRPPLEEDDEEGE.

The signal sequence occupies residues 1 to 31; the sequence is MARALCPLQALWLLEWVLLLLGPCAAPPAWA. Residues 32 to 993 are Extracellular-facing; that stretch reads LNLDPVQLTF…TQLLRALEER (962 aa). FG-GAP repeat units lie at residues 35-96, 110-173, 187-238, 251-305, 306-371, 373-432, and 435-496; these read DPVQ…GGQC, VGSQ…RRAE, VEND…FSSY, SLSF…DSYY, QRLH…PHAL, APSL…GLRS, and SQVL…VQDS. Residue Asn46 is glycosylated (N-linked (GlcNAc...) asparagine). Disulfide bonds link Cys87–Cys96, Cys138–Cys161, and Cys177–Cys198. Residues Glu274, Asp276, and Asp278 each coordinate Ca(2+). Asn280 carries an N-linked (GlcNAc...) asparagine glycan. Ca(2+) contacts are provided by Thr281, Glu283, Asp328, Asn330, Asp332, Arg334, Asp336, Asp396, Asp398, Asp400, Tyr402, Asp404, Asp457, Asp459, Asn461, Tyr463, and Asp465. Intrachain disulfides connect Cys504–Cys515 and Cys521–Cys576. An N-linked (GlcNAc...) asparagine glycan is attached at Asn601. Cystine bridges form between Cys633/Cys639, Cys705/Cys718, Cys857/Cys921, and Cys911/Cys916. Asn711 carries N-linked (GlcNAc...) asparagine glycosylation. Residue Ile874 is glycosylated (O-linked (GalNAc...) serine; in variant S-874). Ser878 is a glycosylation site (O-linked (GalNAc...) serine). The residue at position 891 (Gln891) is a Pyrrolidone carboxylic acid; in light chain form 1. Asn962 carries an N-linked (GlcNAc...) asparagine glycan. A helical transmembrane segment spans residues 994–1019; it reads AIPIWWVLVGVLGGLLLLTILVLAMW. The Cytoplasmic portion of the chain corresponds to 1020–1039; that stretch reads KVGFFKRNRPPLEEDDEEGE. The short motif at 1022-1026 is the GFFKR motif element; sequence GFFKR.

Belongs to the integrin alpha chain family. Heterodimer of an alpha and a beta subunit. The alpha subunit is composed of a heavy and a light chain linked by a disulfide bond. Alpha-IIb associates with beta-3. Directly interacts with RNF181. Interacts (via C-terminus cytoplasmic tail region) with CIB1; the interaction is direct and calcium-dependent. Interacts (via C-terminus cytoplasmic tail region) with CIB2, CIB3 and CIB4; the interactions are stabilized/increased in a calcium and magnesium-dependent manner. ITGA2B:ITGB3 interacts with PPIA/CYPA; the interaction is ROS and PPIase activity-dependent and is increased in the presence of thrombin. ITGA2B:ITGB3 interacts with SELP (via C-type lectin domain); the interaction mediates cell-cell interaction and adhesion. In terms of processing, cleaved by ELANE; the cleavage promotes activation of platelet fibrinogen receptor integrin alpha-IIb/beta-3. Isoform 1 and isoform 2 are expressed in platelets and megakaryocytes, but not in reticulocytes. Not detected in Jurkat, nor in U937 cell lines. Isoform 3 is expressed in prostate adenocarcinoma, as well as in several erythroleukemia, prostate adenocarcinoma and melanoma cell lines, including PC-3, DU-145, HEL, WM983A, WM983B and WM35. Not detected in platelets, nor in normal prostate (at protein level).

Its subcellular location is the membrane. Integrin alpha-IIb/beta-3 is a receptor for fibronectin, fibrinogen, plasminogen, prothrombin, thrombospondin and vitronectin. It recognizes the sequence R-G-D in a wide array of ligands. It recognizes the sequence H-H-L-G-G-G-A-K-Q-A-G-D-V in fibrinogen gamma chain. Following activation integrin alpha-IIb/beta-3 brings about platelet/platelet interaction through binding of soluble fibrinogen. This step leads to rapid platelet aggregation which physically plugs ruptured endothelial cell surface. The protein is Integrin alpha-IIb (ITGA2B) of Homo sapiens (Human).